The following is a 274-amino-acid chain: MTEEPLSAAWLTERTIYLLTLLREKRPLVHNITNLVVTNTTANALLALGASPAMVEGVEEVDSFARMADSLVINLGTMSSPRAAAMRLAMAAARQAGKPVVLDPVAVGALRYRTELARDLLEAKPHIVRGNASEIIALAGDGGGGRGVDSLVSSTAALEAASILARRTGGAVAVTGATDYVTDGTRLIGIANGHPMMTRVTGLGCTATALIGAFAAVEPDPLVAACAGLCATGLAGELAAIRADGPGSLQVEFLDALYALDSAILRDAARWVLP.

Met54 lines the substrate pocket. Positions 129 and 175 each coordinate ATP. Gly202 is a binding site for substrate.

Belongs to the Thz kinase family. Mg(2+) is required as a cofactor.

It carries out the reaction 5-(2-hydroxyethyl)-4-methylthiazole + ATP = 4-methyl-5-(2-phosphooxyethyl)-thiazole + ADP + H(+). Its pathway is cofactor biosynthesis; thiamine diphosphate biosynthesis; 4-methyl-5-(2-phosphoethyl)-thiazole from 5-(2-hydroxyethyl)-4-methylthiazole: step 1/1. Catalyzes the phosphorylation of the hydroxyl group of 4-methyl-5-beta-hydroxyethylthiazole (THZ). This Granulibacter bethesdensis (strain ATCC BAA-1260 / CGDNIH1) protein is Hydroxyethylthiazole kinase.